The sequence spans 340 residues: Probable allantoicase (340 aa).

Belongs to the allantoicase family.

It catalyses the reaction allantoate + H2O = (S)-ureidoglycolate + urea. It participates in nitrogen metabolism; (S)-allantoin degradation; (S)-ureidoglycolate from allantoate (aminidohydrolase route): step 1/1. The chain is Probable allantoicase from Rhizobium meliloti (strain 1021) (Ensifer meliloti).